The primary structure comprises 523 residues: 2-isopropylmalate synthase (523 aa).

One can recognise a Pyruvate carboxyltransferase domain in the interval 5-267 (VIIFDTTLRD…HTAINHQEIW (263 aa)). Mn(2+) contacts are provided by D14, H202, H204, and N238. The interval 392 to 523 (RLDYFSVQSG…QHNENNKETV (132 aa)) is regulatory domain.

It belongs to the alpha-IPM synthase/homocitrate synthase family. LeuA type 1 subfamily. Homodimer. Mn(2+) serves as cofactor.

The protein localises to the cytoplasm. The catalysed reaction is 3-methyl-2-oxobutanoate + acetyl-CoA + H2O = (2S)-2-isopropylmalate + CoA + H(+). Its pathway is amino-acid biosynthesis; L-leucine biosynthesis; L-leucine from 3-methyl-2-oxobutanoate: step 1/4. Functionally, catalyzes the condensation of the acetyl group of acetyl-CoA with 3-methyl-2-oxobutanoate (2-ketoisovalerate) to form 3-carboxy-3-hydroxy-4-methylpentanoate (2-isopropylmalate). The polypeptide is 2-isopropylmalate synthase (Shigella flexneri serotype 5b (strain 8401)).